Here is an 87-residue protein sequence, read N- to C-terminus: Long neurotoxin LlLong (87 aa).

Positions 1–20 (KTLLLTLVVVTIICLDFGYT) are cleaved as a signal peptide. Cystine bridges form between C23/C41, C34/C62, C47/C51, C66/C77, and C78/C83.

It belongs to the three-finger toxin family. Long-chain subfamily. Type II alpha-neurotoxin sub-subfamily. Expressed by the venom gland.

The protein localises to the secreted. In terms of biological role, binds with high affinity to muscular (alpha-1/CHRNA1) and neuronal (alpha-7/CHRNA7) nicotinic acetylcholine receptor (nAChR) and inhibits acetylcholine from binding to the receptor, thereby impairing neuromuscular and neuronal transmission. The sequence is that of Long neurotoxin LlLong from Laticauda laticaudata (Blue-ringed sea krait).